Consider the following 447-residue polypeptide: Na(+)-translocating NADH-quinone reductase subunit A (447 aa).

Belongs to the NqrA family. In terms of assembly, composed of six subunits; NqrA, NqrB, NqrC, NqrD, NqrE and NqrF.

It catalyses the reaction a ubiquinone + n Na(+)(in) + NADH + H(+) = a ubiquinol + n Na(+)(out) + NAD(+). Functionally, NQR complex catalyzes the reduction of ubiquinone-1 to ubiquinol by two successive reactions, coupled with the transport of Na(+) ions from the cytoplasm to the periplasm. NqrA to NqrE are probably involved in the second step, the conversion of ubisemiquinone to ubiquinol. This chain is Na(+)-translocating NADH-quinone reductase subunit A, found in Saccharophagus degradans (strain 2-40 / ATCC 43961 / DSM 17024).